A 70-amino-acid chain; its full sequence is NADH dehydrogenase [ubiquinone] 1 alpha subcomplex subunit 1 (70 aa).

Residues Met-1–Val-21 form a helical membrane-spanning segment.

The protein belongs to the complex I NDUFA1 subunit family. Complex I is composed of 45 different subunits.

The protein localises to the mitochondrion inner membrane. Functionally, accessory subunit of the mitochondrial membrane respiratory chain NADH dehydrogenase (Complex I), that is believed not to be involved in catalysis. Complex I functions in the transfer of electrons from NADH to the respiratory chain. The immediate electron acceptor for the enzyme is believed to be ubiquinone. The protein is NADH dehydrogenase [ubiquinone] 1 alpha subcomplex subunit 1 (Ndufa1) of Mus musculus (Mouse).